The following is a 315-amino-acid chain: 7,8-didemethyl-8-hydroxy-5-deazariboflavin synthase (315 aa).

Residues 6-237 (ITYSPAFTLV…EDITIQIPAN (232 aa)) enclose the Radical SAM core domain. [4Fe-4S] cluster contacts are provided by cysteine 20, cysteine 24, and cysteine 27.

The protein belongs to the radical SAM superfamily. CofG family. In terms of assembly, consists of two subunits, CofG and CofH. It depends on [4Fe-4S] cluster as a cofactor.

The enzyme catalyses 5-amino-5-(4-hydroxybenzyl)-6-(D-ribitylimino)-5,6-dihydrouracil + S-adenosyl-L-methionine = 7,8-didemethyl-8-hydroxy-5-deazariboflavin + 5'-deoxyadenosine + L-methionine + NH4(+) + H(+). The protein operates within cofactor biosynthesis; coenzyme F0 biosynthesis. Functionally, catalyzes the radical-mediated synthesis of 7,8-didemethyl-8-hydroxy-5-deazariboflavin from 5-amino-5-(4-hydroxybenzyl)-6-(D-ribitylimino)-5,6-dihydrouracil. This chain is 7,8-didemethyl-8-hydroxy-5-deazariboflavin synthase, found in Thermosynechococcus vestitus (strain NIES-2133 / IAM M-273 / BP-1).